A 221-amino-acid chain; its full sequence is MRSQLSLIGKKEGMMHVFDKNGNLVACSVISIEPNVVAQLKTASSDGYNAVQMGADAVKAPEKTIEKRFSKALLGHFKKSGGCAFRVLKEVVVSEEAVQSVSLGDEFGVEIFDGVSNVDVCGISKGKGFQGVMKKFGFRGGPKSHGSGFHRHAGSIGMRSTPGRCFPGSKRPSHMGCDRVTVKNLEVVKVDLDRKVMLVKGAIPGFKGSVVVVKRSCGVEG.

This sequence belongs to the universal ribosomal protein uL3 family. Part of the 50S ribosomal subunit. Forms a cluster with proteins L14 and L19.

Functionally, one of the primary rRNA binding proteins, it binds directly near the 3'-end of the 23S rRNA, where it nucleates assembly of the 50S subunit. This chain is Large ribosomal subunit protein uL3, found in Chlamydia muridarum (strain MoPn / Nigg).